The following is a 278-amino-acid chain: N-terminal Xaa-Pro-Lys N-methyltransferase 2 (278 aa).

S-adenosyl-L-methionine-binding positions include Gly-123, Arg-128, Asp-145, 174 to 175 (LQ), Gln-190, and His-195.

This sequence belongs to the methyltransferase superfamily. NTM1 family.

The protein localises to the nucleus. The catalysed reaction is N-terminal L-alanyl-L-prolyl-L-lysyl-[protein] + S-adenosyl-L-methionine = N-terminal N-methyl-L-alanyl-L-prolyl-L-lysyl-[protein] + S-adenosyl-L-homocysteine + H(+). It carries out the reaction N-terminal L-prolyl-L-prolyl-L-lysyl-[protein] + S-adenosyl-L-methionine = N-terminal N-methyl-L-prolyl-L-prolyl-L-lysyl-[protein] + S-adenosyl-L-homocysteine + H(+). It catalyses the reaction N-terminal L-seryl-L-prolyl-L-lysyl-[protein] + S-adenosyl-L-methionine = N-terminal N-methyl-L-seryl-L-prolyl-L-lysyl-[protein] + S-adenosyl-L-homocysteine + H(+). In terms of biological role, alpha N-methyltransferase that methylates the N-terminus of target proteins containing the N-terminal motif [Ala/Pro/Ser]-Pro-Lys when the initiator Met is cleaved. Specifically catalyzes monomethylation of exposed alpha-amino group of Ala or Ser residue in the [Ala/Ser]-Pro-Lys motif and Pro in the Pro-Pro-Lys motif. Predominantly functions as a mono-methyltransferase but is also able to di-/tri-methylate the GPKRIA peptide and di-methylate the PPKRIA peptide (in vitro). May activate NTMT1 by priming its substrates for trimethylation. This Danio rerio (Zebrafish) protein is N-terminal Xaa-Pro-Lys N-methyltransferase 2 (ntmt2).